Reading from the N-terminus, the 104-residue chain is ATP-dependent Clp protease adapter protein ClpS (104 aa).

It belongs to the ClpS family. Binds to the N-terminal domain of the chaperone ClpA.

In terms of biological role, involved in the modulation of the specificity of the ClpAP-mediated ATP-dependent protein degradation. The protein is ATP-dependent Clp protease adapter protein ClpS of Paraburkholderia phymatum (strain DSM 17167 / CIP 108236 / LMG 21445 / STM815) (Burkholderia phymatum).